Reading from the N-terminus, the 700-residue chain is Hedgehog-interacting protein (700 aa).

Residues 1–17 (MLKMLSFKLLLLAVALG) form the signal peptide. Asn-99 carries an N-linked (GlcNAc...) asparagine glycan. 10 disulfides stabilise this stretch: Cys-216/Cys-536, Cys-218/Cys-543, Cys-402/Cys-624, Cys-435/Cys-452, Cys-500/Cys-594, Cys-612/Cys-623, Cys-625/Cys-634, Cys-639/Cys-649, Cys-643/Cys-655, and Cys-657/Cys-666. The segment at 376-388 (LDDMEEMDGLSDF) is interaction with SHH zinc binding site. Asp-383 provides a ligand contact to Zn(2+). N-linked (GlcNAc...) asparagine glycans are attached at residues Asn-416, Asn-447, and Asn-459. EGF-like domains follow at residues 607-634 (DCSR…GDFC) and 635-667 (RIAK…PQCE).

Belongs to the HHIP family. Interacts with all three hedgehog family members, SHH, IHH and DHH. As to expression, in the adult brain, high expression found in the ventral cochlear nucleus, medial habenula, indusium griseum and tenia tecta. Some expression also in the caudate putamen, the nucleus accumbens, the ventral pallidum and in the superficial layers of the superior colliculus.

The protein localises to the cell membrane. It localises to the secreted. Modulates hedgehog signaling in several cell types, including brain and lung through direct interaction with members of the hedgehog family. Soluble forms inhibit Shh-induced differentiation in the fibroblast cell line C3H/10T1/2. In Mus musculus (Mouse), this protein is Hedgehog-interacting protein (Hhip).